Reading from the N-terminus, the 336-residue chain is tRNA N6-adenosine threonylcarbamoyltransferase (336 aa).

Residues His114 and His118 each contribute to the Fe cation site. Residues 136–140, Asp169, Gly182, Asp186, and Asn275 each bind substrate; that span reads LVSGG. Position 302 (Asp302) interacts with Fe cation.

The protein belongs to the KAE1 / TsaD family. Fe(2+) is required as a cofactor.

The protein resides in the cytoplasm. It carries out the reaction L-threonylcarbamoyladenylate + adenosine(37) in tRNA = N(6)-L-threonylcarbamoyladenosine(37) in tRNA + AMP + H(+). Functionally, required for the formation of a threonylcarbamoyl group on adenosine at position 37 (t(6)A37) in tRNAs that read codons beginning with adenine. Is involved in the transfer of the threonylcarbamoyl moiety of threonylcarbamoyl-AMP (TC-AMP) to the N6 group of A37, together with TsaE and TsaB. TsaD likely plays a direct catalytic role in this reaction. The sequence is that of tRNA N6-adenosine threonylcarbamoyltransferase from Streptococcus agalactiae serotype Ia (strain ATCC 27591 / A909 / CDC SS700).